The primary structure comprises 156 residues: Small ribosomal subunit protein uS7 (156 aa).

This sequence belongs to the universal ribosomal protein uS7 family. In terms of assembly, part of the 30S ribosomal subunit. Contacts proteins S9 and S11.

Functionally, one of the primary rRNA binding proteins, it binds directly to 16S rRNA where it nucleates assembly of the head domain of the 30S subunit. Is located at the subunit interface close to the decoding center, probably blocks exit of the E-site tRNA. In Pasteurella multocida (strain Pm70), this protein is Small ribosomal subunit protein uS7.